The primary structure comprises 606 residues: Melanoma-associated antigen D2 (606 aa).

Disordered stretches follow at residues 1-29 and 52-204; these read MSDTSESGAGLTRFQAEASEKDSSSMMQT and SEDV…GGRR. Ser-2 is modified (N-acetylserine). Ser-5 carries the phosphoserine modification. At Thr-72 the chain carries Phosphothreonine. Positions 79–100 are enriched in polar residues; that stretch reads PATQASSTTQLTDTQVLATENK. A compositionally biased stretch (basic and acidic residues) spans 122–131; it reads ETKKVSHVAD. Positions 142–164 are enriched in low complexity; sequence EAAPSQASADEPEPESAAAQSQE. Ser-157 bears the Phosphoserine mark. Over residues 171-181 the composition is skewed to basic residues; that stretch reads KVKAKKARKVK. Phosphoserine occurs at positions 190, 191, 194, 197, 244, and 247. The segment covering 248–260 has biased composition (basic residues); it reads PKARRGKARRRAA. The tract at residues 248-275 is disordered; sequence PKARRGKARRRAAKLQSSQEPEAPPPRD. 2 positions are modified to phosphoserine: Ser-264 and Ser-265. The region spanning 279–478 is the MAGE domain; the sequence is LQGRANDLVK…KEWAAQYREA (200 aa). The interval 534 to 563 is disordered; the sequence is GAEAKAKAQESGSASTGASTSTNNSASASA.

In terms of assembly, interacts with GNAS.

In terms of biological role, regulates the expression, localization to the plasma membrane and function of the sodium chloride cotransporters SLC12A1 and SLC12A3, two key components of salt reabsorption in the distal renal tubule. This is Melanoma-associated antigen D2 (MAGED2) from Pongo abelii (Sumatran orangutan).